A 105-amino-acid chain; its full sequence is MALWTRLRPLLALLALWPPPPARAFVNQHLCGSHLVEALYLVCGERGFFYTPKARREVEGPQVGALELAGGPGAGGLEGPPQKRGIVEQCCASVCSLYQLENYCN.

Positions 1 to 24 (MALWTRLRPLLALLALWPPPPARA) are cleaved as a signal peptide. Cystine bridges form between cysteine 31/cysteine 91, cysteine 43/cysteine 104, and cysteine 90/cysteine 95. Positions 57 to 82 (EVEGPQVGALELAGGPGAGGLEGPPQ) are cleaved as a propeptide — c peptide.

The protein belongs to the insulin family. Heterodimer of a B chain and an A chain linked by two disulfide bonds.

The protein localises to the secreted. Functionally, insulin decreases blood glucose concentration. It increases cell permeability to monosaccharides, amino acids and fatty acids. It accelerates glycolysis, the pentose phosphate cycle, and glycogen synthesis in liver. This Bos taurus (Bovine) protein is Insulin (INS).